We begin with the raw amino-acid sequence, 141 residues long: uncharacterized protein (141 aa).

The next 4 membrane-spanning stretches (helical) occupy residues 7 to 27 (VAIM…AASL), 47 to 67 (SAVG…MLGV), 75 to 95 (AVLC…ILMF), and 106 to 126 (VIFV…WFVA).

Its subcellular location is the cell membrane. This is an uncharacterized protein from Bacillus subtilis (strain 168).